Consider the following 304-residue polypeptide: MIVVLIGALSIDIIFGEPKEYIHPVVFSGRVASAIEGYFRKFDNRFRAGILFSIAVIVLTAIPYFLAVYLSSFILVVYVVVSMVILKTTFSITSMGEHIKLITDSLKKGNIMEARMHLSMIVRRDTSRLNENEISSAAIESIAEGLVDGYITPLFFFVFFGLPGAFIARIINTLDSMYGYKDRKNFEFGRFSAFMDTVINYIPARISWFFITFSSDILNYRSKAIPVRRYIRRFDSVNAGWPIASMASALNLRLEKKGHYIVNDDGYQPGVADIEKSMKIYYLAAYSYIVIFVLPLLVIMAVFL.

A run of 5 helical transmembrane segments spans residues 2–22, 50–70, 73–93, 147–167, and 284–304; these read IVVL…KEYI, ILFS…AVYL, FILV…FSIT, VDGY…GAFI, and AAYS…AVFL.

This sequence belongs to the CobD/CbiB family.

The protein localises to the cell membrane. It participates in cofactor biosynthesis; adenosylcobalamin biosynthesis. Converts cobyric acid to cobinamide by the addition of aminopropanol on the F carboxylic group. This is Probable cobalamin biosynthesis protein CobD from Thermoplasma volcanium (strain ATCC 51530 / DSM 4299 / JCM 9571 / NBRC 15438 / GSS1).